A 406-amino-acid chain; its full sequence is Cysteine desulfurase (406 aa).

N6-(pyridoxal phosphate)lysine is present on Lys226. Cys364 (cysteine persulfide intermediate) is an active-site residue.

Belongs to the class-V pyridoxal-phosphate-dependent aminotransferase family. Csd subfamily. In terms of assembly, homodimer. Interacts with SufE and the SufBCD complex composed of SufB, SufC and SufD. The interaction with SufE is required to mediate the direct transfer of the sulfur atom from the S-sulfanylcysteine. Requires pyridoxal 5'-phosphate as cofactor.

The protein localises to the cytoplasm. It catalyses the reaction (sulfur carrier)-H + L-cysteine = (sulfur carrier)-SH + L-alanine. The catalysed reaction is L-selenocysteine + AH2 = hydrogenselenide + L-alanine + A + H(+). The protein operates within cofactor biosynthesis; iron-sulfur cluster biosynthesis. In terms of biological role, cysteine desulfurases mobilize the sulfur from L-cysteine to yield L-alanine, an essential step in sulfur metabolism for biosynthesis of a variety of sulfur-containing biomolecules. Component of the suf operon, which is activated and required under specific conditions such as oxidative stress and iron limitation. Acts as a potent selenocysteine lyase in vitro, that mobilizes selenium from L-selenocysteine. Selenocysteine lyase activity is however unsure in vivo. The protein is Cysteine desulfurase of Yersinia pestis bv. Antiqua (strain Antiqua).